The primary structure comprises 455 residues: Nucleolar protein 12 (455 aa).

Disordered stretches follow at residues 1–104 (MSSF…ENEN) and 117–142 (QNEE…RTKA). Positions 24-37 (NTRDGPVSKDELVK) are enriched in basic and acidic residues. Residues 51-66 (PKQQTNENESTLNQSA) show a composition bias toward polar residues. Residues 68–91 (ESDEEEEEYNDESNEGDDSDDAEQ) are compositionally biased toward acidic residues. A compositionally biased stretch (basic and acidic residues) spans 124–141 (SKESSEAKSSKVAEERTK). RRM domains lie at 160–258 (RTVF…HVSH) and 266–351 (RTIF…RAKS). Disordered stretches follow at residues 333-402 (LETG…RSTV) and 420-455 (AIKG…MNKV). The span at 339-348 (KKGRKLRISR) shows a compositional bias: basic residues. Over residues 349 to 363 (AKSNAKPSLMSPNHF) the composition is skewed to polar residues. The span at 425 to 438 (KGSKKGKKVKKPRI) shows a compositional bias: basic residues. Basic and acidic residues predominate over residues 439 to 455 (RERSTKFKEERKTMNKV).

This sequence belongs to the RRM RBM34 family.

It localises to the nucleus. The protein resides in the nucleolus. Functionally, involved in pre-25S rRNA processing. The protein is Nucleolar protein 12 (NOP12) of Candida albicans (strain SC5314 / ATCC MYA-2876) (Yeast).